The sequence spans 158 residues: SsrA-binding protein (158 aa).

This sequence belongs to the SmpB family.

The protein resides in the cytoplasm. Functionally, required for rescue of stalled ribosomes mediated by trans-translation. Binds to transfer-messenger RNA (tmRNA), required for stable association of tmRNA with ribosomes. tmRNA and SmpB together mimic tRNA shape, replacing the anticodon stem-loop with SmpB. tmRNA is encoded by the ssrA gene; the 2 termini fold to resemble tRNA(Ala) and it encodes a 'tag peptide', a short internal open reading frame. During trans-translation Ala-aminoacylated tmRNA acts like a tRNA, entering the A-site of stalled ribosomes, displacing the stalled mRNA. The ribosome then switches to translate the ORF on the tmRNA; the nascent peptide is terminated with the 'tag peptide' encoded by the tmRNA and targeted for degradation. The ribosome is freed to recommence translation, which seems to be the essential function of trans-translation. The chain is SsrA-binding protein from Psychrobacter sp. (strain PRwf-1).